Here is a 405-residue protein sequence, read N- to C-terminus: Mucosal addressin cell adhesion molecule 1 (405 aa).

The first 21 residues, 1 to 21, serve as a signal peptide directing secretion; the sequence is MESILALLLALALVPYQLSRG. 2 consecutive Ig-like domains span residues 22 to 109 and 110 to 227; these read QSFQ…ILVY and AFPD…TSPK. Topologically, residues 22-364 are extracellular; the sequence is QSFQVNPPES…PGQVTPNSSS (343 aa). 3 disulfides stabilise this stretch: C45–C91, C49–C95, and C132–C200. A mucin-like region spans residues 221–257; that stretch reads QSQTSPKPPNTTSAEPYILTSSSTAEAVSTGLNITTL. 2 N-linked (GlcNAc...) asparagine glycosylation sites follow: N230 and N253. The disordered stretch occupies residues 255–275; sequence TTLPSAPPYPKLSPRTLSSEG. Positions 258–357 constitute an Ig-like 3 domain; sequence PSAPPYPKLS…EVTNLYVPGQ (100 aa). Residues C293 and C341 are joined by a disulfide bond. The N-linked (GlcNAc...) asparagine glycan is linked to N361. The chain crosses the membrane as a helical span at residues 365–385; it reads TVVLWIGSLVLGLLALVFLAY. Over 386–405 the chain is Cytoplasmic; sequence RLWKCYRPGPRPDTSSCTHL.

As to quaternary structure, homodimer. O-glycosylated; contains syalic acid. The Ser/Thr-rich mucin-like domain may provide possible sites for O-glycosylation. In terms of tissue distribution, highly expressed on high endothelial venules (HEV) of organized intestinal lymphoid tissues like the Peyer patches and mesenteric lymph nodes, and in the lamina propria of the intestine. Some expression found in the spleen, and low levels of expression in the peripheral lymph nodes and the lactating mammary gland. No expression was detected in the liver, kidneys, lungs or in normal brain. Expressed as well in brain endothelioma cells, and mucosal tissues which are in a chronic state of inflammation, such as inflamed pancreas.

It is found in the membrane. Its function is as follows. Cell adhesion leukocyte receptor expressed by mucosal venules, helps to direct lymphocyte traffic into mucosal tissues including the Peyer patches and the intestinal lamina propria. It can bind both the integrin alpha-4/beta-7 and L-selectin, regulating both the passage and retention of leukocytes. Both isoform 1 and isoform 2 can adhere to integrin alpha-4/beta-7. Isoform 2, lacking the mucin-like domain, may be specialized in supporting integrin alpha-4/beta-7-dependent adhesion strengthening, independent of L-selectin binding. The protein is Mucosal addressin cell adhesion molecule 1 (Madcam1) of Mus musculus (Mouse).